The sequence spans 346 residues: Blue-light-activated histidine kinase 2 (346 aa).

Residues 8–82 (HDKEAWGRLP…KAIRNCEEVE (75 aa)) enclose the PAS domain. Position 55 is an S-4a-FMN cysteine (Cys-55). One can recognise a PAC domain in the interval 79 to 133 (EEVEETIYNYRADGEGFWNHLLMGPLEDQDEKCRYFVGIQVDMGQSESPDRATEL). One can recognise a Histidine kinase domain in the interval 139 to 334 (EVQHRVKNHL…IVNIDIPLSQ (196 aa)). His-142 carries the phosphohistidine; by autocatalysis modification.

Post-translationally, FMN binds covalently to cysteine after exposure to blue light and this bond is spontaneously broken in the dark.

The catalysed reaction is ATP + protein L-histidine = ADP + protein N-phospho-L-histidine.. Its function is as follows. Photosensitive kinase that is involved in increased bacterial virulence upon exposure to light. In Erythrobacter litoralis (strain HTCC2594), this protein is Blue-light-activated histidine kinase 2.